The chain runs to 680 residues: Probable ATP-dependent RNA helicase pitchoune (680 aa).

Residues 1 to 168 (MSIREKLLMK…GKPAKDDEPF (168 aa)) are disordered. Residues 29–42 (KNAQKQEPPKQNGN) are compositionally biased toward polar residues. Residues 59 to 69 (DEDDDLEEDFQ) are compositionally biased toward acidic residues. Over residues 74 to 83 (PKKKQQKQPP) the composition is skewed to basic residues. Acidic residues predominate over residues 95–141 (SESDDDEQEDEADEDSDLDEVAEVDEEDVDSGSEDDDQQEDEDEEEP). A Q motif motif is present at residues 187-215 (FASLKGAVSEATLRAIKEMGFTEMTEIQS). One can recognise a Helicase ATP-binding domain in the interval 218 to 393 (LTPLLKGRDL…KLALKSEPIY (176 aa)). 231–238 (AQTGSGKT) provides a ligand contact to ATP. A DEVD box motif is present at residues 341 to 344 (DEVD). Positions 407-577 (GLEQGYIVCP…DIQLQLEKLI (171 aa)) constitute a Helicase C-terminal domain. Positions 659–680 (GSASKQRHFKQVNRDQAKKFMR) are disordered. Residues 670-680 (VNRDQAKKFMR) are compositionally biased toward basic and acidic residues.

It belongs to the DEAD box helicase family. DDX18/HAS1 subfamily.

The protein localises to the nucleus. The protein resides in the nucleolus. The enzyme catalyses ATP + H2O = ADP + phosphate + H(+). Probable RNA-dependent helicase. Functions in cell growth and proliferation. May have a role in ribosome biogenesis and, consequently, in protein biosynthesis. The sequence is that of Probable ATP-dependent RNA helicase pitchoune (pit) from Drosophila melanogaster (Fruit fly).